Here is a 359-residue protein sequence, read N- to C-terminus: Phospho-N-acetylmuramoyl-pentapeptide-transferase (359 aa).

Transmembrane regions (helical) follow at residues 27 to 47, 73 to 93, 94 to 114, 134 to 154, 166 to 186, 197 to 217, 233 to 253, 261 to 281, 286 to 306, and 336 to 356; these read IYAL…MMRW, TMGG…WADL, TNIY…VGFV, LLGQ…QPAY, FTPD…IGAS, GLAI…IYIA, GVGE…GFLW, LFMG…IAVL, LLLI…IMQV, and KIVI…LSTL.

The protein belongs to the glycosyltransferase 4 family. MraY subfamily. Mg(2+) is required as a cofactor.

Its subcellular location is the cell inner membrane. The enzyme catalyses UDP-N-acetyl-alpha-D-muramoyl-L-alanyl-gamma-D-glutamyl-meso-2,6-diaminopimeloyl-D-alanyl-D-alanine + di-trans,octa-cis-undecaprenyl phosphate = di-trans,octa-cis-undecaprenyl diphospho-N-acetyl-alpha-D-muramoyl-L-alanyl-D-glutamyl-meso-2,6-diaminopimeloyl-D-alanyl-D-alanine + UMP. It participates in cell wall biogenesis; peptidoglycan biosynthesis. Functionally, catalyzes the initial step of the lipid cycle reactions in the biosynthesis of the cell wall peptidoglycan: transfers peptidoglycan precursor phospho-MurNAc-pentapeptide from UDP-MurNAc-pentapeptide onto the lipid carrier undecaprenyl phosphate, yielding undecaprenyl-pyrophosphoryl-MurNAc-pentapeptide, known as lipid I. The sequence is that of Phospho-N-acetylmuramoyl-pentapeptide-transferase from Maridesulfovibrio salexigens (strain ATCC 14822 / DSM 2638 / NCIMB 8403 / VKM B-1763) (Desulfovibrio salexigens).